A 342-amino-acid chain; its full sequence is tRNA N6-adenosine threonylcarbamoyltransferase (342 aa).

Fe cation contacts are provided by H115 and H119. Substrate-binding positions include 138-142, D171, G184, and N276; that span reads LVSGG. Residue D304 coordinates Fe cation.

It belongs to the KAE1 / TsaD family. The cofactor is Fe(2+).

The protein localises to the cytoplasm. It catalyses the reaction L-threonylcarbamoyladenylate + adenosine(37) in tRNA = N(6)-L-threonylcarbamoyladenosine(37) in tRNA + AMP + H(+). Required for the formation of a threonylcarbamoyl group on adenosine at position 37 (t(6)A37) in tRNAs that read codons beginning with adenine. Is involved in the transfer of the threonylcarbamoyl moiety of threonylcarbamoyl-AMP (TC-AMP) to the N6 group of A37, together with TsaE and TsaB. TsaD likely plays a direct catalytic role in this reaction. This chain is tRNA N6-adenosine threonylcarbamoyltransferase, found in Dichelobacter nodosus (strain VCS1703A).